The chain runs to 1492 residues: Copper-transporting ATPase 1 (1492 aa).

Topologically, residues 1-645 are cytoplasmic; sequence MEPNMDANSI…KREIKQWRGS (645 aa). HMA domains lie at 8–74 and 85–151; these read NSIT…FDAL and TNTV…LDMG. Positions 18, 19, and 22 each coordinate Cu(+). The residue at position 152 (Thr-152) is a Phosphothreonine. Residues 171–237 form the HMA 3 domain; sequence VLLKMRVEGM…QIEAVGFPAF (67 aa). Cu(+)-binding residues include Cys-182 and Cys-185. Ser-270 bears the Phosphoserine mark. One can recognise an HMA 4 domain in the interval 277–343; it reads SAITFTIDGM…AIEAVSPGQY (67 aa). Positions 288 and 291 each coordinate Cu(+). Position 327 is a phosphothreonine (Thr-327). Ser-339, Ser-353, Ser-357, and Ser-362 each carry phosphoserine. HMA domains are found at residues 377–443, 480–546, and 556–622; these read QEVV…FDAV, NKCY…FGAV, and GILE…FEAS. The Cu(+) site is built by Cys-388, Cys-391, Cys-491, Cys-494, Cys-567, and Cys-570. A helical membrane pass occupies residues 646–667; it reads FLVSLFFCIPVMGLMIYMMVMD. Residues 668–706 lie on the Extracellular side of the membrane; it reads HHLATLNHNQNMSNEEMINMHSSMFLERQILPGLSIMNL. Asn-678 is a glycosylation site (N-linked (GlcNAc...) asparagine). A helical membrane pass occupies residues 707 to 726; it reads LSLLLCLPVQFCGGWYFYIQ. The Cytoplasmic segment spans residues 727–733; the sequence is AYKALRH. Residues 734-754 form a helical membrane-spanning segment; the sequence is KTANMDVLIVLATTIAFAYSL. At 755–773 the chain is on the extracellular side; sequence VILLVAMYERAKVNPITFF. Residues 774–794 form a helical membrane-spanning segment; that stretch reads DTPPMLFVFIALGRWLEHIAK. Residues 795 to 927 lie on the Cytoplasmic side of the membrane; it reads GKTSEALAKL…SKAPIQQFAD (133 aa). Residues 928–951 traverse the membrane as a helical segment; it reads KLSGYFVPFIVLVSIVTLLVWIII. At 952-981 the chain is on the extracellular side; the sequence is GFQNFEIVEAYFPGYNRSISRTETIIRFAF. The helical transmembrane segment at 982-1003 threads the bilayer; sequence QASITVLCIACPCSLGLATPTA. Over 1004-1348 the chain is Cytoplasmic; sequence VMVGTGVGAQ…LSRKTVKRIR (345 aa). Asp-1036 (4-aspartylphosphate intermediate) is an active-site residue. Residue Glu-1073 coordinates ATP. At Thr-1204 the chain carries Phosphothreonine. Asp-1293 and Asp-1297 together coordinate Mg(2+). Residues 1349–1366 form a helical membrane-spanning segment; the sequence is INFVFALIYNLIGIPIAA. The Extracellular segment spans residues 1367–1377; sequence GVFLPIGLVLQ. The helical transmembrane segment at 1378–1397 threads the bilayer; that stretch reads PWMGSAAMAASSVSVVLSSL. Residues 1398–1492 are Cytoplasmic-facing; it reads FLKLYRKPTY…DFREDDDTTL (95 aa). Residues Ser-1422, Ser-1424, Ser-1452, Ser-1455, and Ser-1458 each carry the phosphoserine modification. The short motif at 1459 to 1460 is the Endocytosis signal element; it reads LL. Phosphoserine is present on residues Ser-1461, Ser-1465, Ser-1468, and Ser-1478. The tract at residues 1478–1492 is PDZD11-binding; the sequence is SLLVGDFREDDDTTL. Residues 1479–1480 carry the Endocytosis signal motif; it reads LL.

This sequence belongs to the cation transport ATPase (P-type) (TC 3.A.3) family. Type IB subfamily. Monomer. Interacts with PDZD11. Interacts with ATOX1 and COMMD1. Interacts with TYRP1. Directly interacts with SOD3; this interaction is copper-dependent and is required for SOD3 activity. Expressed in hippocampal neuron (at protein level). Expressed in anterior pituitary gland (at protein level).

The protein resides in the golgi apparatus. It localises to the trans-Golgi network membrane. It is found in the cell membrane. Its subcellular location is the melanosome membrane. The protein localises to the early endosome membrane. The protein resides in the cell projection. It localises to the axon. It is found in the dendrite. Its subcellular location is the postsynaptic density. The catalysed reaction is Cu(+)(in) + ATP + H2O = Cu(+)(out) + ADP + phosphate + H(+). In terms of biological role, ATP-driven copper (Cu(+)) ion pump that plays an important role in intracellular copper ion homeostasis. Within a catalytic cycle, acquires Cu(+) ion from donor protein on the cytoplasmic side of the membrane and delivers it to acceptor protein on the lumenal side. The transfer of Cu(+) ion across the membrane is coupled to ATP hydrolysis and is associated with a transient phosphorylation that shifts the pump conformation from inward-facing to outward-facing state. Under physiological conditions, at low cytosolic copper concentration, it is localized at the trans-Golgi network (TGN) where it transfers Cu(+) ions to cuproenzymes of the secretory pathway. Upon elevated cytosolic copper concentrations, it relocalizes to the plasma membrane where it is responsible for the export of excess Cu(+) ions. May play a dual role in neuron function and survival by regulating cooper efflux and neuronal transmission at the synapse as well as by supplying Cu(+) ions to enzymes such as PAM, TYR and SOD3. In the melanosomes of pigmented cells, provides copper cofactor to TYR to form an active TYR holoenzyme for melanin biosynthesis. The protein is Copper-transporting ATPase 1 of Rattus norvegicus (Rat).